The sequence spans 344 residues: Holliday junction branch migration complex subunit RuvB (344 aa).

Residues 4–184 (QDRIIDANAK…FGIVQRLEFY (181 aa)) form a large ATPase domain (RuvB-L) region. ATP contacts are provided by residues arginine 24, glycine 65, lysine 68, threonine 69, threonine 70, 131-133 (EDF), arginine 174, tyrosine 184, and arginine 221. Threonine 69 lines the Mg(2+) pocket. Residues 185–255 (NIEDLTHIVE…IADLALNMLN (71 aa)) are small ATPAse domain (RuvB-S). The segment at 258-344 (EHGFDHMDRR…ALKQDSLPGI (87 aa)) is head domain (RuvB-H). Residues arginine 294, arginine 313, and arginine 318 each contribute to the DNA site.

This sequence belongs to the RuvB family. As to quaternary structure, homohexamer. Forms an RuvA(8)-RuvB(12)-Holliday junction (HJ) complex. HJ DNA is sandwiched between 2 RuvA tetramers; dsDNA enters through RuvA and exits via RuvB. An RuvB hexamer assembles on each DNA strand where it exits the tetramer. Each RuvB hexamer is contacted by two RuvA subunits (via domain III) on 2 adjacent RuvB subunits; this complex drives branch migration. In the full resolvosome a probable DNA-RuvA(4)-RuvB(12)-RuvC(2) complex forms which resolves the HJ.

Its subcellular location is the cytoplasm. The catalysed reaction is ATP + H2O = ADP + phosphate + H(+). Functionally, the RuvA-RuvB-RuvC complex processes Holliday junction (HJ) DNA during genetic recombination and DNA repair, while the RuvA-RuvB complex plays an important role in the rescue of blocked DNA replication forks via replication fork reversal (RFR). RuvA specifically binds to HJ cruciform DNA, conferring on it an open structure. The RuvB hexamer acts as an ATP-dependent pump, pulling dsDNA into and through the RuvAB complex. RuvB forms 2 homohexamers on either side of HJ DNA bound by 1 or 2 RuvA tetramers; 4 subunits per hexamer contact DNA at a time. Coordinated motions by a converter formed by DNA-disengaged RuvB subunits stimulates ATP hydrolysis and nucleotide exchange. Immobilization of the converter enables RuvB to convert the ATP-contained energy into a lever motion, pulling 2 nucleotides of DNA out of the RuvA tetramer per ATP hydrolyzed, thus driving DNA branch migration. The RuvB motors rotate together with the DNA substrate, which together with the progressing nucleotide cycle form the mechanistic basis for DNA recombination by continuous HJ branch migration. Branch migration allows RuvC to scan DNA until it finds its consensus sequence, where it cleaves and resolves cruciform DNA. This is Holliday junction branch migration complex subunit RuvB from Saccharophagus degradans (strain 2-40 / ATCC 43961 / DSM 17024).